Consider the following 314-residue polypeptide: Putative S-adenosyl-L-methionine-dependent methyltransferase MAB_3886c (314 aa).

S-adenosyl-L-methionine-binding positions include Asp-133 and 162 to 163 (DL).

Belongs to the UPF0677 family.

In terms of biological role, exhibits S-adenosyl-L-methionine-dependent methyltransferase activity. This Mycobacteroides abscessus (strain ATCC 19977 / DSM 44196 / CCUG 20993 / CIP 104536 / JCM 13569 / NCTC 13031 / TMC 1543 / L948) (Mycobacterium abscessus) protein is Putative S-adenosyl-L-methionine-dependent methyltransferase MAB_3886c.